The chain runs to 47 residues: Putative glycosylation-dependent cell adhesion molecule 1 (47 aa).

The first 18 residues, 1–18, serve as a signal peptide directing secretion; the sequence is MKFFMVLLPASLASTSLA.

It belongs to the PP3/GlyCAM-1 family. Expressed in cells harvested from milk of lactating women. Not found in other tissues.

This Homo sapiens (Human) protein is Putative glycosylation-dependent cell adhesion molecule 1 (GLYCAM1).